We begin with the raw amino-acid sequence, 101 residues long: Large ribosomal subunit protein eL30 (101 aa).

It belongs to the eukaryotic ribosomal protein eL30 family.

This Pyrobaculum neutrophilum (strain DSM 2338 / JCM 9278 / NBRC 100436 / V24Sta) (Thermoproteus neutrophilus) protein is Large ribosomal subunit protein eL30.